The chain runs to 682 residues: Pneumocandin biosynthesis cluster protein B (682 aa).

Positions Ser63–Ser73 are enriched in low complexity. Disordered stretches follow at residues Ser63 to Glu86, Gln107 to Gln129, and Ser251 to Asn358. Polar residues-rich tracts occupy residues Asn257–Ser279 and Pro310–Asp320. The segment covering Pro335–Asp349 has biased composition (basic and acidic residues).

Its function is as follows. Part of the gene cluster that mediates the biosynthesis of pneumocandins, lipohexapeptides of the echinocandin family that prevent fungal cell wall formation by non-competitive inhibition of beta-1,3-glucan synthase. The 10,12-dimethylmyristoyl side chain is synthesized by the reducing polyketide synthase gloL/GLPKS4. The thioesterase gloN/GLHYD exclusively interacts with gloL/GLPKS4 to maintain turnover of the polyketide side chain. The 10R,12S-dimethylmyristic acid is then transferred to the first thiolation domain of the nonribosomal peptide synthetase gloA/GLNRPS4 by the acyl-AMP ligase gloD/GLligase, followed by its acylation to L-ornithine to trigger elongation of the cyclic hexapeptide. L-ornithine, 4R-hydroxyl-L-proline (generated from L-proline by the dioxygenase gloF/GLOXY2), 3S-hydroxyl-L-homotyrosine (generated by gloG/GLHtyB, gloH/GLHtyA, gloI/GLHtyC, gloJ/GLHtyD and hydroxylated at C-3 by the dioxygenase gloM/GLOXY1), 3R-hydroxyl-L-glutamine (generated from L-glutamine probably by the dioxygenase gloE/GLOXY3) and 3S-hydroxyl-L-proline (generated from L-proline by the dioxygenase gloF/GLOXY2 to yield pneumocandin B0), or 3S-hydroxyl-4S-methyl-L-proline (generated from L-leucine by the dioxygenase gloC/GLOXY4 to yield pneumocandin A0) are sequentially added to the growing chain. The last C domain of gloA/GLNRPS4 is proposed to be responsible for cyclization by condensation to form the peptide bond between L-ornithine and 3S-hydroxyl-4S-methyl-L-proline (for pneumocandin A0) or 3S-hydroxyl-L-proline (for pneumocandin B0). Finally, the subsequent C-4 hydroxylation of 3S-hydroxyl-L-homotyrosine and L-ornithine dihydroxylation at C-4 and C-5 are performed by the cytochrome P450 monooxygenases gloP/GLP450-1 and gloO/GLP450-2, respectively. The protein is Pneumocandin biosynthesis cluster protein B of Glarea lozoyensis (strain ATCC 20868 / MF5171).